The primary structure comprises 196 residues: Imidazoleglycerol-phosphate dehydratase (196 aa).

It belongs to the imidazoleglycerol-phosphate dehydratase family.

It is found in the cytoplasm. The enzyme catalyses D-erythro-1-(imidazol-4-yl)glycerol 3-phosphate = 3-(imidazol-4-yl)-2-oxopropyl phosphate + H2O. The protein operates within amino-acid biosynthesis; L-histidine biosynthesis; L-histidine from 5-phospho-alpha-D-ribose 1-diphosphate: step 6/9. This chain is Imidazoleglycerol-phosphate dehydratase, found in Desulforamulus reducens (strain ATCC BAA-1160 / DSM 100696 / MI-1) (Desulfotomaculum reducens).